The primary structure comprises 113 residues: Large ribosomal subunit protein bL19 (113 aa).

The protein belongs to the bacterial ribosomal protein bL19 family.

This protein is located at the 30S-50S ribosomal subunit interface and may play a role in the structure and function of the aminoacyl-tRNA binding site. The polypeptide is Large ribosomal subunit protein bL19 (Mycobacterium marinum (strain ATCC BAA-535 / M)).